A 2890-amino-acid chain; its full sequence is Bifunctional DNA-directed RNA polymerase subunit beta-beta' (2890 aa).

Residues Met1–Asp1377 are DNA-directed RNA polymerase subunit beta. A DNA-directed RNA polymerase subunit beta' region spans residues Pro1384–Ile2890. Residues Cys1449, Cys1451, Cys1465, and Cys1468 each contribute to the Zn(2+) site. Positions 1849, 1851, and 1853 each coordinate Mg(2+). Zn(2+)-binding residues include Cys2179, Cys2253, Cys2260, and Cys2263.

It in the N-terminal section; belongs to the RNA polymerase beta chain family. The protein in the C-terminal section; belongs to the RNA polymerase beta' chain family. As to quaternary structure, the RNAP catalytic core consists of 2 alpha, 1 beta/beta' and 1 omega subunit. When a sigma factor is associated with the core the holoenzyme is formed, which can initiate transcription. Requires Mg(2+) as cofactor. It depends on Zn(2+) as a cofactor.

It carries out the reaction RNA(n) + a ribonucleoside 5'-triphosphate = RNA(n+1) + diphosphate. Its function is as follows. DNA-dependent RNA polymerase catalyzes the transcription of DNA into RNA using the four ribonucleoside triphosphates as substrates. In Helicobacter acinonychis (strain Sheeba), this protein is Bifunctional DNA-directed RNA polymerase subunit beta-beta' (rpoBC).